The chain runs to 262 residues: Nitrate transport protein NasD (262 aa).

Residues 5 to 239 (IQVQGVSQRF…RPRNRVQLAD (235 aa)) enclose the ABC transporter domain. 41–48 (GHSGCGKS) lines the ATP pocket.

This sequence belongs to the ABC transporter superfamily.

It is found in the cell membrane. In terms of biological role, probably part of a high-affinity binding-protein-dependent transport system for nitrate. Probably responsible for energy coupling to the transport system. The polypeptide is Nitrate transport protein NasD (nasD) (Klebsiella oxytoca).